A 361-amino-acid chain; its full sequence is NAD-dependent protein deacetylase hst2-1 (361 aa).

The 261-residue stretch at 16–276 (SVLEARTVEA…RKLARALGWE (261 aa)) folds into the Deacetylase sirtuin-type domain. NAD(+)-binding positions include 43–63 (GAGISTAAGIPDFRSPDTGIY) and 126–129 (QNID). H146 (proton acceptor) is an active-site residue. Zn(2+) contacts are provided by C154, C157, C178, and C181. NAD(+)-binding positions include 217-219 (GTS), 242-244 (NRE), and C262. Residues 294–328 (EEELATPRTREERLENEISRLTAEIDKTLKISDAY) are a coiled coil. Residues 335–361 (RLEGEPLSSPESNGTGLAHVFPHLARR) form a disordered region.

The protein belongs to the sirtuin family. Class I subfamily. Requires Zn(2+) as cofactor.

The protein localises to the cytoplasm. It localises to the nucleus. The catalysed reaction is N(6)-acetyl-L-lysyl-[protein] + NAD(+) + H2O = 2''-O-acetyl-ADP-D-ribose + nicotinamide + L-lysyl-[protein]. Its function is as follows. NAD-dependent histone deacetylase, which could function in telomeric silencing, cell cycle progression and chromosome stability. The sequence is that of NAD-dependent protein deacetylase hst2-1 from Emericella nidulans (strain FGSC A4 / ATCC 38163 / CBS 112.46 / NRRL 194 / M139) (Aspergillus nidulans).